Here is a 239-residue protein sequence, read N- to C-terminus: Ribose-5-phosphate isomerase A (239 aa).

Residues 30-33 (SGST), 87-90 (DGAD), and 100-103 (KGGG) each bind substrate. E109 acts as the Proton acceptor in catalysis. Residue K127 participates in substrate binding.

The protein belongs to the ribose 5-phosphate isomerase family. In terms of assembly, homodimer.

It carries out the reaction aldehydo-D-ribose 5-phosphate = D-ribulose 5-phosphate. The protein operates within carbohydrate degradation; pentose phosphate pathway; D-ribose 5-phosphate from D-ribulose 5-phosphate (non-oxidative stage): step 1/1. Functionally, catalyzes the reversible conversion of ribose-5-phosphate to ribulose 5-phosphate. This Synechococcus sp. (strain CC9605) protein is Ribose-5-phosphate isomerase A.